A 150-amino-acid polypeptide reads, in one-letter code: MNKENKTQAVNKAKNTAKVAKKGSSITKHKTYTGVRFFRPKTLQLAKAPKYSRTVRAHLKVSGHLDNHSVVKTPLTTEKAMKKMEDENTMVFYVHNRSTKPQIKSAFEKLYNVKVRSVNTLNTITGNKKAYIRLAADSDSLTLANKIGLI.

The interval 1-24 (MNKENKTQAVNKAKNTAKVAKKGS) is disordered. Low complexity predominate over residues 7–18 (TQAVNKAKNTAK).

This sequence belongs to the universal ribosomal protein uL23 family.

In Tetrahymena thermophila (strain SB210), this protein is Large ribosomal subunit protein uL23 (RPL23A).